The sequence spans 513 residues: Maturase K (513 aa).

This sequence belongs to the intron maturase 2 family. MatK subfamily.

Its subcellular location is the plastid. It localises to the chloroplast. Its function is as follows. Usually encoded in the trnK tRNA gene intron. Probably assists in splicing its own and other chloroplast group II introns. The protein is Maturase K of Pinus parviflora (Japanese white pine).